A 256-amino-acid chain; its full sequence is Type III pantothenate kinase (256 aa).

6–13 lines the ATP pocket; the sequence is DVGNTNTV. Residues Y100 and 107–110 contribute to the substrate site; that span reads GADR. The active-site Proton acceptor is the D109. K(+) is bound at residue D129. T132 contacts ATP. A substrate-binding site is contributed by T184.

It belongs to the type III pantothenate kinase family. In terms of assembly, homodimer. The cofactor is NH4(+). K(+) is required as a cofactor.

It localises to the cytoplasm. The enzyme catalyses (R)-pantothenate + ATP = (R)-4'-phosphopantothenate + ADP + H(+). It functions in the pathway cofactor biosynthesis; coenzyme A biosynthesis; CoA from (R)-pantothenate: step 1/5. Functionally, catalyzes the phosphorylation of pantothenate (Pan), the first step in CoA biosynthesis. The sequence is that of Type III pantothenate kinase from Myxococcus xanthus (strain DK1622).